The chain runs to 612 residues: Glycosyltransferase 25 family member (612 aa).

The N-terminal stretch at 1 to 20 (MNKQVIFGLLLACILVCISG) is a signal peptide. N-linked (GlcNAc...) asparagine glycosylation is found at Asn-106, Asn-227, Asn-263, and Asn-524. Residues 609-612 (HQEL) carry the Prevents secretion from ER motif.

The protein belongs to the glycosyltransferase 25 family.

Its subcellular location is the endoplasmic reticulum lumen. The polypeptide is Glycosyltransferase 25 family member (Drosophila melanogaster (Fruit fly)).